The sequence spans 255 residues: Imidazole glycerol phosphate synthase subunit HisF (255 aa).

Residues aspartate 12 and aspartate 131 contribute to the active site.

It belongs to the HisA/HisF family. As to quaternary structure, heterodimer of HisH and HisF.

Its subcellular location is the cytoplasm. The catalysed reaction is 5-[(5-phospho-1-deoxy-D-ribulos-1-ylimino)methylamino]-1-(5-phospho-beta-D-ribosyl)imidazole-4-carboxamide + L-glutamine = D-erythro-1-(imidazol-4-yl)glycerol 3-phosphate + 5-amino-1-(5-phospho-beta-D-ribosyl)imidazole-4-carboxamide + L-glutamate + H(+). It functions in the pathway amino-acid biosynthesis; L-histidine biosynthesis; L-histidine from 5-phospho-alpha-D-ribose 1-diphosphate: step 5/9. In terms of biological role, IGPS catalyzes the conversion of PRFAR and glutamine to IGP, AICAR and glutamate. The HisF subunit catalyzes the cyclization activity that produces IGP and AICAR from PRFAR using the ammonia provided by the HisH subunit. This Salinispora tropica (strain ATCC BAA-916 / DSM 44818 / JCM 13857 / NBRC 105044 / CNB-440) protein is Imidazole glycerol phosphate synthase subunit HisF.